Here is a 197-residue protein sequence, read N- to C-terminus: Crossover junction endodeoxyribonuclease RuvC (197 aa).

Active-site residues include Asp7, Glu68, and Asp141. Mg(2+)-binding residues include Asp7, Glu68, and Asp141. Composition is skewed to low complexity over residues 165–181 (AAPA…TPAR) and 188–197 (APARRPAGAS). A disordered region spans residues 165–197 (AAPAAPVSRPAPATPARRSPRPAAPARRPAGAS).

This sequence belongs to the RuvC family. In terms of assembly, homodimer which binds Holliday junction (HJ) DNA. The HJ becomes 2-fold symmetrical on binding to RuvC with unstacked arms; it has a different conformation from HJ DNA in complex with RuvA. In the full resolvosome a probable DNA-RuvA(4)-RuvB(12)-RuvC(2) complex forms which resolves the HJ. Mg(2+) is required as a cofactor.

It is found in the cytoplasm. It catalyses the reaction Endonucleolytic cleavage at a junction such as a reciprocal single-stranded crossover between two homologous DNA duplexes (Holliday junction).. The RuvA-RuvB-RuvC complex processes Holliday junction (HJ) DNA during genetic recombination and DNA repair. Endonuclease that resolves HJ intermediates. Cleaves cruciform DNA by making single-stranded nicks across the HJ at symmetrical positions within the homologous arms, yielding a 5'-phosphate and a 3'-hydroxyl group; requires a central core of homology in the junction. The consensus cleavage sequence is 5'-(A/T)TT(C/G)-3'. Cleavage occurs on the 3'-side of the TT dinucleotide at the point of strand exchange. HJ branch migration catalyzed by RuvA-RuvB allows RuvC to scan DNA until it finds its consensus sequence, where it cleaves and resolves the cruciform DNA. The chain is Crossover junction endodeoxyribonuclease RuvC from Frankia alni (strain DSM 45986 / CECT 9034 / ACN14a).